The primary structure comprises 418 residues: Serine hydroxymethyltransferase (418 aa).

(6S)-5,6,7,8-tetrahydrofolate-binding positions include leucine 121 and 125–127; that span reads GHL. Lysine 230 carries the N6-(pyridoxal phosphate)lysine modification. (6S)-5,6,7,8-tetrahydrofolate is bound at residue 356–358; the sequence is SPF.

It belongs to the SHMT family. As to quaternary structure, homodimer. Pyridoxal 5'-phosphate serves as cofactor.

It localises to the cytoplasm. The catalysed reaction is (6R)-5,10-methylene-5,6,7,8-tetrahydrofolate + glycine + H2O = (6S)-5,6,7,8-tetrahydrofolate + L-serine. Its pathway is one-carbon metabolism; tetrahydrofolate interconversion. It participates in amino-acid biosynthesis; glycine biosynthesis; glycine from L-serine: step 1/1. In terms of biological role, catalyzes the reversible interconversion of serine and glycine with tetrahydrofolate (THF) serving as the one-carbon carrier. This reaction serves as the major source of one-carbon groups required for the biosynthesis of purines, thymidylate, methionine, and other important biomolecules. Also exhibits THF-independent aldolase activity toward beta-hydroxyamino acids, producing glycine and aldehydes, via a retro-aldol mechanism. This chain is Serine hydroxymethyltransferase, found in Shewanella halifaxensis (strain HAW-EB4).